The sequence spans 228 residues: Probable endonuclease LCL3 (228 aa).

The helical transmembrane segment at Leu-13–Tyr-30 threads the bilayer. Residues Arg-52–Leu-210 form the TNase-like domain. Arg-101 is an active-site residue. Residue Asp-106 participates in Ca(2+) binding. Catalysis depends on residues Glu-109 and Arg-149.

It belongs to the LCL3 family.

The protein resides in the mitochondrion. It localises to the membrane. The chain is Probable endonuclease LCL3 (LCL3) from Meyerozyma guilliermondii (strain ATCC 6260 / CBS 566 / DSM 6381 / JCM 1539 / NBRC 10279 / NRRL Y-324) (Yeast).